We begin with the raw amino-acid sequence, 417 residues long: Phosphoglycerate kinase 2 (417 aa).

Ser4 is subject to Phosphoserine. Position 11 is an N6-acetyllysine (Lys11). Residues Val23, Asp24, Phe25, Asn26, Gln38, and Arg39 each contribute to the (2R)-3-phosphoglycerate site. N6-acetyllysine is present on Lys48. Residues Ser62, His63, Gly65, and Arg66 each contribute to the (2R)-3-phosphoglycerate site. 3 positions are modified to N6-acetyllysine: Lys75, Lys86, and Lys97. Positions 122 and 123 each coordinate (2R)-3-phosphoglycerate. 2 positions are modified to N6-acetyllysine: Lys131 and Lys146. Residues His170 and Arg171 each contribute to the (2R)-3-phosphoglycerate site. Tyr196 is modified (phosphotyrosine). Lys199 is subject to N6-acetyllysine. Residue Gly214 coordinates ADP. A CDP-binding site is contributed by Gly214. Residues Ala215 and Lys216 each contribute to the AMP site. Ala215 contributes to the ATP binding site. Ala215 is a Mg(2+) binding site. Asp219 is a CDP binding site. Asp219 contacts Mg(2+). Lys220 serves as a coordination point for AMP. Lys220 lines the ATP pocket. Gly238 serves as a coordination point for ADP. A CDP-binding site is contributed by Gly238. Residue Gly239 participates in AMP binding. Gly239 provides a ligand contact to ATP. Lys267 and Lys291 each carry N6-acetyllysine. Residue Gly313 coordinates AMP. Gly313 contacts ATP. CDP contacts are provided by Gly338, Ile340, and Phe343. Phe343 is an ADP binding site. Glu344 is an AMP binding site. Glu344, Asp375, and Thr376 together coordinate ATP. Asp375 lines the Mg(2+) pocket.

The protein belongs to the phosphoglycerate kinase family. In terms of assembly, monomer. The cofactor is Mg(2+). Testis and sperm. Localized on the principle piece in the sperm (at protein level). Testis-specific.

It is found in the cytoplasm. It catalyses the reaction (2R)-3-phosphoglycerate + ATP = (2R)-3-phospho-glyceroyl phosphate + ADP. The protein operates within carbohydrate degradation; glycolysis; pyruvate from D-glyceraldehyde 3-phosphate: step 2/5. In terms of biological role, essential for sperm motility and male fertility but is not required for the completion of spermatogenesis. The sequence is that of Phosphoglycerate kinase 2 (Pgk2) from Mus musculus (Mouse).